The sequence spans 143 residues: Transcriptional regulator MraZ (143 aa).

2 consecutive SpoVT-AbrB domains span residues 5–47 and 76–119; these read QYEH…SLEE and AVEC…SKEV.

The protein belongs to the MraZ family. Forms oligomers.

It is found in the cytoplasm. Its subcellular location is the nucleoid. The protein is Transcriptional regulator MraZ of Thermoanaerobacter sp. (strain X514).